Consider the following 137-residue polypeptide: uncharacterized protein (137 aa).

Residues 116-137 (ARPPRGSGGTRTARNGARTASE) are disordered. The segment covering 125-137 (TRTARNGARTASE) has biased composition (polar residues).

This is an uncharacterized protein from Mycobacterium bovis (strain ATCC BAA-935 / AF2122/97).